Consider the following 955-residue polypeptide: Serine-aspartate repeat-containing protein C (955 aa).

The first 50 residues, 1–50 (MNNKKTVTNRKGMIPNRLNKFSIRKYSVGTASILVGTTLIFGLSGHEAKA), serve as a signal peptide directing secretion. The tract at residues 51 to 166 (AEHTNGELNQ…TPKTTTIKPR (116 aa)) is disordered. The segment at 51–495 (AEHTNGELNQ…GSSTANGDQK (445 aa)) is ligand binding A region. Over residues 56-71 (GELNQSKNETTAPSEN) the composition is skewed to polar residues. Residues 72–83 (KTTEKVDSHQLK) are compositionally biased toward basic and acidic residues. The span at 84-114 (DNTQTATADQPKVTMSDSATFKETSSNMQSP) shows a compositional bias: polar residues. Positions 115-132 (QNATASQSTTQTSNVTTN) are enriched in low complexity. Positions 133–164 (DKSSTTYSNETDKSNLTQAKDVSATPKTTTIK) are enriched in polar residues. 2 consecutive CNA-B domains span residues 496–606 (KYNL…YKTP) and 607–717 (KYSL…EEET). A disordered region spans residues 678–935 (TQTGTNTTED…NNSNNGTLFG (258 aa)). 2 stretches are compositionally biased toward acidic residues: residues 685 to 695 (TEDDKDADGGE) and 712 to 894 (YYEE…DSDS). An LPXTG sorting signal motif is present at residues 918 to 922 (LPETG). Positions 920 to 935 (ETGSENNNSNNGTLFG) are enriched in low complexity. Thr921 is modified (pentaglycyl murein peptidoglycan amidated threonine). The propeptide at 922–955 (GSENNNSNNGTLFGGLFAALGSLLLFGRRKKQNK) is removed by sortase.

It belongs to the serine-aspartate repeat-containing protein (SDr) family. In terms of assembly, homodimerizes; via N2-Domain. Interacts with host NRXN1; this interaction mediates bacterial attachment to host cells.

The protein resides in the secreted. The protein localises to the cell wall. Functionally, cell surface-associated calcium-binding protein which plays an important role in adhesion and pathogenesis. Mediates interactions with components of the extracellular matrix such as host NRXN1 to promote bacterial adhesion. This is Serine-aspartate repeat-containing protein C (sdrC) from Staphylococcus aureus (strain MW2).